We begin with the raw amino-acid sequence, 127 residues long: Small ribosomal subunit protein uS13 (127 aa).

Positions 93-127 are disordered; the sequence is RRSLPVRGQRTHTNARTRKGPRKGTVANKKKATAK.

It belongs to the universal ribosomal protein uS13 family. Part of the 30S ribosomal subunit. Forms a loose heterodimer with protein S19. Forms two bridges to the 50S subunit in the 70S ribosome.

Located at the top of the head of the 30S subunit, it contacts several helices of the 16S rRNA. In the 70S ribosome it contacts the 23S rRNA (bridge B1a) and protein L5 of the 50S subunit (bridge B1b), connecting the 2 subunits; these bridges are implicated in subunit movement. Contacts the tRNAs in the A and P-sites. This chain is Small ribosomal subunit protein uS13, found in Koribacter versatilis (strain Ellin345).